Here is a 262-residue protein sequence, read N- to C-terminus: Lens fiber major intrinsic protein (262 aa).

Residues methionine 1–phenylalanine 9 are Cytoplasmic-facing. Residues tryptophan 10–glycine 29 traverse the membrane as a helical segment. Over alanine 30 to valine 41 the chain is Extracellular. A helical membrane pass occupies residues leucine 42 to leucine 59. At glycine 60–histidine 61 the chain is on the cytoplasmic side. An intramembrane region (discontinuously helical) is located at residues valine 62–leucine 77. The NPA 1 motif lies at asparagine 68 to alanine 70. The Cytoplasmic segment spans residues alanine 78 to serine 82. Residues leucine 83 to glycine 106 traverse the membrane as a helical segment. At valine 107–proline 127 the chain is on the extracellular side. A helical membrane pass occupies residues glycine 128–serine 148. At phenylalanine 149 to arginine 156 the chain is on the cytoplasmic side. The helical transmembrane segment at proline 157 to glycine 175 threads the bilayer. Topologically, residues isoleucine 176–phenylalanine 178 are extracellular. The discontinuously helical intramembrane region spans threonine 179–valine 193. Residues asparagine 184 to alanine 186 carry the NPA 2 motif. Residues isoleucine 194–asparagine 200 lie on the Extracellular side of the membrane. The chain crosses the membrane as a helical span at residues histidine 201–alanine 222. Residues leucine 223 to leucine 262 are Cytoplasmic-facing. An interaction with CALM region spans residues alanine 227–leucine 237. The segment at glutamate 240 to leucine 262 is disordered. Residues alanine 243 to glutamate 253 show a composition bias toward pro residues.

This sequence belongs to the MIP/aquaporin (TC 1.A.8) family. As to quaternary structure, homotetramer; each monomer provides an independent water pore. Two homotetramers on opposing membranes can dimerize, forming a cell-cell junction. Interacts with CALM; the calcium-calmodulin/CALM complex interacts with the cytoplasmic domains of two aquaporins, leading to channel closure. During early stages of lens development, interacts through its C-terminal region with Cx56 and GJA8/Cx45.6. In terms of tissue distribution, major component of lens fiber gap junctions.

It is found in the cell membrane. The protein localises to the cell junction. The enzyme catalyses H2O(in) = H2O(out). Its activity is regulated as follows. The water channel activity is inhibited by calcium through calmodulin/CALM. Functionally, aquaporins form homotetrameric transmembrane channels, with each monomer independently mediating water transport across the plasma membrane along its osmotic gradient. Specifically expressed in lens fiber cells, this aquaporin is crucial for maintaining lens water homeostasis and transparency. Beyond water permeability, it also acts as a cell-to-cell adhesion molecule, forming thin junctions between lens fiber cells that are essential for maintaining the ordered structure and transparency of the lens. The protein is Lens fiber major intrinsic protein of Gallus gallus (Chicken).